We begin with the raw amino-acid sequence, 502 residues long: ATP synthase subunit alpha, sodium ion specific (502 aa).

169–176 (GDRQTGKT) provides a ligand contact to ATP.

The protein belongs to the ATPase alpha/beta chains family. F-type ATPases have 2 components, CF(1) - the catalytic core - and CF(0) - the membrane proton channel. CF(1) has five subunits: alpha(3), beta(3), gamma(1), delta(1), epsilon(1). CF(0) has three main subunits: a, b and c.

It localises to the cell membrane. The catalysed reaction is 4 Na(+)(in) + ATP + H2O = 4 Na(+)(out) + ADP + phosphate + H(+). Inhibited by nitrate. Functionally, produces ATP from ADP in the presence of a sodium ion gradient across the membrane. The alpha chain is a regulatory subunit. This chain is ATP synthase subunit alpha, sodium ion specific, found in Acetobacterium woodii (strain ATCC 29683 / DSM 1030 / JCM 2381 / KCTC 1655 / WB1).